Consider the following 236-residue polypeptide: Orotidine 5'-phosphate decarboxylase (236 aa).

Residues Asp-16, Lys-38, 65-74 (DLKLHDIGNT), Thr-123, Arg-184, Gln-193, Gly-213, and Arg-214 each bind substrate. The active-site Proton donor is Lys-67.

This sequence belongs to the OMP decarboxylase family. Type 1 subfamily. As to quaternary structure, homodimer.

It catalyses the reaction orotidine 5'-phosphate + H(+) = UMP + CO2. It functions in the pathway pyrimidine metabolism; UMP biosynthesis via de novo pathway; UMP from orotate: step 2/2. Its function is as follows. Catalyzes the decarboxylation of orotidine 5'-monophosphate (OMP) to uridine 5'-monophosphate (UMP). This is Orotidine 5'-phosphate decarboxylase from Methylobacterium nodulans (strain LMG 21967 / CNCM I-2342 / ORS 2060).